Reading from the N-terminus, the 86-residue chain is uncharacterized protein (86 aa).

The protein to C.jejuni CJ0253.

This is an uncharacterized protein from Helicobacter pylori (strain ATCC 700392 / 26695) (Campylobacter pylori).